The chain runs to 31 residues: Chassatide C6 (31 aa).

The cyclopeptide (Gly-Asn) cross-link spans 1 to 31 (GVIPCGESCVFIPCISSVIGCSCKNKVCYRN). 3 disulfide bridges follow: Cys-5–Cys-21, Cys-9–Cys-23, and Cys-14–Cys-28.

This is a cyclic peptide. Expressed in fruit, pedicel, root and stem but not in leaf (at protein level).

In terms of biological role, probably participates in a plant defense mechanism. This chain is Chassatide C6, found in Chassalia chartacea (Chassalia curviflora).